A 344-amino-acid chain; its full sequence is Putative replication factor C small subunit L499 (344 aa).

57–64 (GPSGSGKT) lines the ATP pocket.

The protein belongs to the activator 1 small subunits family. RfcS subfamily.

Part of the RFC clamp loader complex which loads the PCNA sliding clamp onto DNA. The polypeptide is Putative replication factor C small subunit L499 (Acanthamoeba polyphaga mimivirus (APMV)).